The following is a 177-amino-acid chain: NAD(P)H-quinone oxidoreductase subunit 6, chloroplastic (177 aa).

Transmembrane regions (helical) follow at residues 10 to 30 (FLLVFLGLGFIMGGLGVVLLT), 32 to 52 (PIFSAFSLGLVLVCTSLFYTP), 61 to 81 (AQLLIYVGAINVLIIFAVMFM), 92 to 112 (LWTVGDGVTSLVCTSIFVSLI), and 152 to 172 (FFLPFELISIILLVALIGAIS).

It belongs to the complex I subunit 6 family. As to quaternary structure, NDH is composed of at least 16 different subunits, 5 of which are encoded in the nucleus.

The protein localises to the plastid. Its subcellular location is the chloroplast thylakoid membrane. It carries out the reaction a plastoquinone + NADH + (n+1) H(+)(in) = a plastoquinol + NAD(+) + n H(+)(out). The enzyme catalyses a plastoquinone + NADPH + (n+1) H(+)(in) = a plastoquinol + NADP(+) + n H(+)(out). NDH shuttles electrons from NAD(P)H:plastoquinone, via FMN and iron-sulfur (Fe-S) centers, to quinones in the photosynthetic chain and possibly in a chloroplast respiratory chain. The immediate electron acceptor for the enzyme in this species is believed to be plastoquinone. Couples the redox reaction to proton translocation, and thus conserves the redox energy in a proton gradient. The sequence is that of NAD(P)H-quinone oxidoreductase subunit 6, chloroplastic (ndhG) from Ranunculus macranthus (Large buttercup).